A 302-amino-acid polypeptide reads, in one-letter code: UPF0725 protein At1g23960 (302 aa).

A2 carries the N-acetylalanine modification.

This sequence belongs to the UPF0725 (EMB2204) family.

The sequence is that of UPF0725 protein At1g23960 from Arabidopsis thaliana (Mouse-ear cress).